A 496-amino-acid polypeptide reads, in one-letter code: Glutamyl-tRNA(Gln) amidotransferase subunit A (496 aa).

Active-site charge relay system residues include K75 and S150. Catalysis depends on S174, which acts as the Acyl-ester intermediate.

It belongs to the amidase family. GatA subfamily. Heterotrimer of A, B and C subunits.

It catalyses the reaction L-glutamyl-tRNA(Gln) + L-glutamine + ATP + H2O = L-glutaminyl-tRNA(Gln) + L-glutamate + ADP + phosphate + H(+). In terms of biological role, allows the formation of correctly charged Gln-tRNA(Gln) through the transamidation of misacylated Glu-tRNA(Gln) in organisms which lack glutaminyl-tRNA synthetase. The reaction takes place in the presence of glutamine and ATP through an activated gamma-phospho-Glu-tRNA(Gln). This Burkholderia vietnamiensis (strain G4 / LMG 22486) (Burkholderia cepacia (strain R1808)) protein is Glutamyl-tRNA(Gln) amidotransferase subunit A.